A 257-amino-acid chain; its full sequence is 6-phosphogluconolactonase (257 aa).

Alanine 2 is modified (N-acetylalanine). Serine 49 bears the Phosphoserine mark. Lysine 180 is subject to N6-acetyllysine.

It belongs to the glucosamine/galactosamine-6-phosphate isomerase family. 6-phosphogluconolactonase subfamily.

The protein resides in the cytoplasm. The enzyme catalyses 6-phospho-D-glucono-1,5-lactone + H2O = 6-phospho-D-gluconate + H(+). It participates in carbohydrate degradation; pentose phosphate pathway; D-ribulose 5-phosphate from D-glucose 6-phosphate (oxidative stage): step 2/3. Hydrolysis of 6-phosphogluconolactone to 6-phosphogluconate. This chain is 6-phosphogluconolactonase, found in Rattus norvegicus (Rat).